The sequence spans 517 residues: Sugar transport protein MST1 (517 aa).

Over 1–25 the chain is Cytoplasmic; it reads MAGGVIVANDGDGSAVDHGGRLTFS. The helical transmembrane segment at 26 to 46 threads the bilayer; it reads VVITCLVAASGGLIFGYDVGI. Residues 47-83 lie on the Extracellular side of the membrane; sequence SGGVSTMEPFLRRFFPGVVRRMAEARPGNEYCVYDSQ. A helical transmembrane segment spans residues 84 to 104; it reads ALTAFTSSLYVAGLVASLVAS. Residues 105 to 120 lie on the Cytoplasmic side of the membrane; it reads RVTRAMGRQAVMVMGG. A helical membrane pass occupies residues 121-141; the sequence is ALFFAGGAVTGFAVNIAMLIV. Topologically, residues 142–143 are extracellular; sequence GR. A helical transmembrane segment spans residues 144–164; that stretch reads MLLGFGVGFTNQAAPLFLAEM. At 165 to 170 the chain is on the cytoplasmic side; the sequence is APTRWR. A helical transmembrane segment spans residues 171-191; the sequence is GSLTAGFQFFLAVGVVIATVT. The Extracellular portion of the chain corresponds to 192-203; the sequence is NYFASRVPWGWR. A helical membrane pass occupies residues 204–224; it reads LSLGLAGAPAVVIFLGALFLT. Residues 225–288 lie on the Cytoplasmic side of the membrane; the sequence is DTPSSLVMRG…AARREYRPYL (64 aa). Residues 289-309 traverse the membrane as a helical segment; that stretch reads VFAVAMPMFFQLTGVIVISFF. At 310-325 the chain is on the extracellular side; sequence SPLVFRTVGFGSNAAL. A helical transmembrane segment spans residues 326-346; it reads MGNVILGAVNLVCLMLSTLVI. Over 347–352 the chain is Cytoplasmic; it reads DRYGRK. The chain crosses the membrane as a helical span at residues 353–373; it reads VLFMVGGAIMIIAQVGVAWIM. Topologically, residues 374 to 389 are extracellular; that stretch reads GAQVGKNGSEAMARPY. Residues 390 to 410 form a helical membrane-spanning segment; that stretch reads AVAVVAFTCLHTAGFGWSWGP. Residues 411-430 are Cytoplasmic-facing; it reads LGWVIPGEIFPVDIRSAGQA. A helical membrane pass occupies residues 431-451; the sequence is MNVSIGLGLTFVQTQSFLAML. Residues 452–456 are Extracellular-facing; sequence CRFRY. A helical transmembrane segment spans residues 457–477; that stretch reads GTFAYYAAWVAVMTVFIAVFL. The Cytoplasmic portion of the chain corresponds to 478–517; that stretch reads PETKGVPLESMATVWARHWYWKRFAREQPKTSADEPTGTY.

It belongs to the major facilitator superfamily. Sugar transporter (TC 2.A.1.1) family.

It localises to the membrane. In terms of biological role, mediates active uptake of hexoses by sugar:proton symport. The polypeptide is Sugar transport protein MST1 (Oryza sativa subsp. japonica (Rice)).